We begin with the raw amino-acid sequence, 110 residues long: MEAIAKHNFARISPQKARLVADLIRGKSVDQALEILTFSNKKAAVLVKKVLESAIANAEHNEGADIDDLNVAKIFVDEGPTMKRIMPRAKGRADRILKRSSHITVVVADR.

The protein belongs to the universal ribosomal protein uL22 family. In terms of assembly, part of the 50S ribosomal subunit.

Functionally, this protein binds specifically to 23S rRNA; its binding is stimulated by other ribosomal proteins, e.g. L4, L17, and L20. It is important during the early stages of 50S assembly. It makes multiple contacts with different domains of the 23S rRNA in the assembled 50S subunit and ribosome. The globular domain of the protein is located near the polypeptide exit tunnel on the outside of the subunit, while an extended beta-hairpin is found that lines the wall of the exit tunnel in the center of the 70S ribosome. The protein is Large ribosomal subunit protein uL22 of Vibrio campbellii (strain ATCC BAA-1116).